The following is a 253-amino-acid chain: 3-deoxy-manno-octulosonate cytidylyltransferase (253 aa).

Belongs to the KdsB family.

It is found in the cytoplasm. It catalyses the reaction 3-deoxy-alpha-D-manno-oct-2-ulosonate + CTP = CMP-3-deoxy-beta-D-manno-octulosonate + diphosphate. It participates in nucleotide-sugar biosynthesis; CMP-3-deoxy-D-manno-octulosonate biosynthesis; CMP-3-deoxy-D-manno-octulosonate from 3-deoxy-D-manno-octulosonate and CTP: step 1/1. Its pathway is bacterial outer membrane biogenesis; lipopolysaccharide biosynthesis. Its function is as follows. Activates KDO (a required 8-carbon sugar) for incorporation into bacterial lipopolysaccharide in Gram-negative bacteria. The chain is 3-deoxy-manno-octulosonate cytidylyltransferase from Edwardsiella ictaluri (strain 93-146).